The primary structure comprises 442 residues: MFS transporter asaE (442 aa).

Over residues 1–10 (MDRSRTSSQG) the composition is skewed to polar residues. A disordered region spans residues 1–43 (MDRSRTSSQGRDVLPPRGDEGRISPSLDKEKSPGPEDQPDAPP). A compositionally biased stretch (basic and acidic residues) spans 17–34 (RGDEGRISPSLDKEKSPG). 12 helical membrane passes run 47–67 (LTAW…FGWV), 89–109 (TISW…PIVG), 119–139 (YLII…SIST), 150–170 (ICSA…VSAW), 177–197 (IAFA…PIMV), 206–226 (FGWS…IAIV), 252–272 (PVFI…FIPI), 288–307 (LASY…RLGA), 319–339 (IFIV…IPAT), 342–362 (APII…VSLS), 381–401 (LLFL…GAIL), and 413–433 (IFSG…RIVG).

This sequence belongs to the major facilitator superfamily. Monocarboxylate porter (TC 2.A.1.13) family.

It localises to the cell membrane. It functions in the pathway secondary metabolite biosynthesis. MFS transporter; part of the gene cluster that mediates the biosynthesis of aspergillic acid. Probably involved in aspergillic acid metabolism and transport. The chain is MFS transporter asaE from Aspergillus flavus (strain ATCC 200026 / FGSC A1120 / IAM 13836 / NRRL 3357 / JCM 12722 / SRRC 167).